A 277-amino-acid chain; its full sequence is Diaminopimelate epimerase (277 aa).

Positions 11 and 65 each coordinate substrate. Cys-74 functions as the Proton donor in the catalytic mechanism. Substrate contacts are provided by residues 75 to 76 (GN), Asn-180, and 198 to 199 (ER). Cys-208 functions as the Proton acceptor in the catalytic mechanism. Residue 209-210 (GT) participates in substrate binding.

The protein belongs to the diaminopimelate epimerase family. In terms of assembly, homodimer.

Its subcellular location is the cytoplasm. It carries out the reaction (2S,6S)-2,6-diaminopimelate = meso-2,6-diaminopimelate. It participates in amino-acid biosynthesis; L-lysine biosynthesis via DAP pathway; DL-2,6-diaminopimelate from LL-2,6-diaminopimelate: step 1/1. Its function is as follows. Catalyzes the stereoinversion of LL-2,6-diaminopimelate (L,L-DAP) to meso-diaminopimelate (meso-DAP), a precursor of L-lysine and an essential component of the bacterial peptidoglycan. In Gemmatimonas aurantiaca (strain DSM 14586 / JCM 11422 / NBRC 100505 / T-27), this protein is Diaminopimelate epimerase.